We begin with the raw amino-acid sequence, 241 residues long: Urease accessory protein UreF (241 aa).

Belongs to the UreF family. In terms of assembly, ureD, UreF and UreG form a complex that acts as a GTP-hydrolysis-dependent molecular chaperone, activating the urease apoprotein by helping to assemble the nickel containing metallocenter of UreC. The UreE protein probably delivers the nickel.

The protein localises to the cytoplasm. Functionally, required for maturation of urease via the functional incorporation of the urease nickel metallocenter. In Rhodopseudomonas palustris (strain BisB18), this protein is Urease accessory protein UreF.